Here is a 383-residue protein sequence, read N- to C-terminus: Succinyl-diaminopimelate desuccinylase (383 aa).

His-70 lines the Zn(2+) pocket. Asp-72 is an active-site residue. Asp-103 serves as a coordination point for Zn(2+). Catalysis depends on Glu-137, which acts as the Proton acceptor. Positions 138, 166, and 352 each coordinate Zn(2+).

The protein belongs to the peptidase M20A family. DapE subfamily. As to quaternary structure, homodimer. Zn(2+) serves as cofactor. It depends on Co(2+) as a cofactor.

It catalyses the reaction N-succinyl-(2S,6S)-2,6-diaminopimelate + H2O = (2S,6S)-2,6-diaminopimelate + succinate. Its pathway is amino-acid biosynthesis; L-lysine biosynthesis via DAP pathway; LL-2,6-diaminopimelate from (S)-tetrahydrodipicolinate (succinylase route): step 3/3. Its function is as follows. Catalyzes the hydrolysis of N-succinyl-L,L-diaminopimelic acid (SDAP), forming succinate and LL-2,6-diaminopimelate (DAP), an intermediate involved in the bacterial biosynthesis of lysine and meso-diaminopimelic acid, an essential component of bacterial cell walls. The polypeptide is Succinyl-diaminopimelate desuccinylase (Hahella chejuensis (strain KCTC 2396)).